A 402-amino-acid polypeptide reads, in one-letter code: Proline-rich protein 25 (402 aa).

Disordered stretches follow at residues 1 to 29, 109 to 255, and 337 to 371; these read MART…AAAH, TVPG…MVGS, and EAAQ…CPGR. Residues 345–355 show a composition bias toward low complexity; it reads RRTAPPRRTAS. Pro residues predominate over residues 356-367; that stretch reads PEPPAPGAPLPA.

The protein is Proline-rich protein 25 (PRR25) of Homo sapiens (Human).